A 313-amino-acid chain; its full sequence is Methionyl-tRNA formyltransferase (313 aa).

113–116 (SLLP) contributes to the (6S)-5,6,7,8-tetrahydrofolate binding site.

This sequence belongs to the Fmt family.

It catalyses the reaction L-methionyl-tRNA(fMet) + (6R)-10-formyltetrahydrofolate = N-formyl-L-methionyl-tRNA(fMet) + (6S)-5,6,7,8-tetrahydrofolate + H(+). Its function is as follows. Attaches a formyl group to the free amino group of methionyl-tRNA(fMet). The formyl group appears to play a dual role in the initiator identity of N-formylmethionyl-tRNA by promoting its recognition by IF2 and preventing the misappropriation of this tRNA by the elongation apparatus. The chain is Methionyl-tRNA formyltransferase from Acidithiobacillus ferrooxidans (strain ATCC 23270 / DSM 14882 / CIP 104768 / NCIMB 8455) (Ferrobacillus ferrooxidans (strain ATCC 23270)).